The primary structure comprises 314 residues: Ribose-phosphate pyrophosphokinase (314 aa).

ATP-binding positions include 37–39 (DGE) and 96–97 (RQ). Mg(2+)-binding residues include His131 and Asp170. Lys194 is a catalytic residue. D-ribose 5-phosphate contacts are provided by residues Arg196, Asp220, and 224–228 (DTGGT).

The protein belongs to the ribose-phosphate pyrophosphokinase family. Class I subfamily. Homohexamer. Mg(2+) is required as a cofactor.

The protein localises to the cytoplasm. The catalysed reaction is D-ribose 5-phosphate + ATP = 5-phospho-alpha-D-ribose 1-diphosphate + AMP + H(+). It participates in metabolic intermediate biosynthesis; 5-phospho-alpha-D-ribose 1-diphosphate biosynthesis; 5-phospho-alpha-D-ribose 1-diphosphate from D-ribose 5-phosphate (route I): step 1/1. Involved in the biosynthesis of the central metabolite phospho-alpha-D-ribosyl-1-pyrophosphate (PRPP) via the transfer of pyrophosphoryl group from ATP to 1-hydroxyl of ribose-5-phosphate (Rib-5-P). This Vibrio vulnificus (strain CMCP6) protein is Ribose-phosphate pyrophosphokinase.